We begin with the raw amino-acid sequence, 417 residues long: Squalene synthase (417 aa).

R52 and R77 together coordinate NADP(+). Residues D80, E83, and D84 each contribute to the Mg(2+) site. R218 serves as a coordination point for NADP(+). Residues 284–304 (SIFNFCAIPQVMAIATLAACY) form a helical membrane-spanning segment. Positions 315 and 317 each coordinate NADP(+). Residues 384 to 404 (PIYLSFVMLLAALSWQYLSTL) traverse the membrane as a helical segment.

It belongs to the phytoene/squalene synthase family. The cofactor is Mg(2+).

The protein localises to the endoplasmic reticulum membrane. The catalysed reaction is 2 (2E,6E)-farnesyl diphosphate + NADPH + H(+) = squalene + 2 diphosphate + NADP(+). The enzyme catalyses 2 (2E,6E)-farnesyl diphosphate + NADH + H(+) = squalene + 2 diphosphate + NAD(+). It catalyses the reaction presqualene diphosphate + NADH + H(+) = squalene + diphosphate + NAD(+). It carries out the reaction presqualene diphosphate + NADPH + H(+) = squalene + diphosphate + NADP(+). The catalysed reaction is 2 (2E,6E)-farnesyl diphosphate = presqualene diphosphate + diphosphate. The protein operates within terpene metabolism; lanosterol biosynthesis; lanosterol from farnesyl diphosphate: step 1/3. Functionally, catalyzes the condensation of 2 farnesyl pyrophosphate (FPP) moieties to form squalene. Proceeds in two distinct steps. In the first half-reaction, two molecules of FPP react to form the stable presqualene diphosphate intermediate (PSQPP), with concomitant release of a proton and a molecule of inorganic diphosphate. In the second half-reaction, PSQPP undergoes heterolysis, isomerization, and reduction with NADPH or NADH to form squalene. It is the first committed enzyme of the sterol biosynthesis pathway. The chain is Squalene synthase (FDFT1) from Bos taurus (Bovine).